The primary structure comprises 459 residues: Zinc finger transcription factor lin-29 (459 aa).

Residues 1–14 (MDQTVLDSAFNSPV) are compositionally biased toward polar residues. The segment at 1–73 (MDQTVLDSAF…GSTGSTPAHH (73 aa)) is disordered. Over residues 16 to 56 (SGIAGTTTGSGSTTHFGVGTNFKVSVRSSSRSTDGTDSTDG) the composition is skewed to low complexity. Polar residues predominate over residues 57–73 (ANSDNVTGSTGSTPAHH). 5 C2H2-type zinc fingers span residues 151–173 (YKCT…MRIH), 180–202 (GPCN…IRTH), 208–232 (YKCK…SRCH), 238–260 (FKCN…IPKH), and 269–291 (HICP…MTKH). The interacts with mab-10 stretch occupies residues 390 to 406 (PGFNMITPLENIQRYNG). The segment covering 423 to 444 (VSSTPSSTSSSSAGSSSSQGGV) has biased composition (low complexity). A disordered region spans residues 423-459 (VSSTPSSTSSSSAGSSSSQGGVFNPQSLINNMKNHSY). A compositionally biased stretch (polar residues) spans 446-459 (NPQSLINNMKNHSY).

As to quaternary structure, interacts (via C-terminus) with transcription cofactor mab-10. Expressed in lateral hypodermal seam cells (at protein level).

Its subcellular location is the nucleus. Transcription factor which regulates the expression of various genes, including those involved in cuticle synthesis and maintenance, such as collagens, and in lipid metabolism. Binds to promoter regions of genes, at 5'-[(T/G)TTTTTT(A/T/C/G)]-3' consensus sequences. Heterochronic protein which controls the choice of stage specific cell fates, including at the juvenile to adult transition. Promotes differentiation, together with transcriptional cofactor mab-10, perhaps as part of a transcriptional complex. Required for vulval morphogenesis and egg laying; perhaps by acting in a subset of the lateral seam cells. Involved in the exit of seam cells from the cell cycle. Required for specification of uterine pi-cell fate, acting upstream of lin-12 Notch signaling, perhaps via maintenance of lag-2 expression in the anchor cell (AC). Involved in morphogenesis of the specialized male tail used in mating. Acts cell non-autonomously from the hypodermis to regulate expression of genes in the intestine, including genes involved in lipid metabolism. May regulate vitellogenesis via the mTORC2 signaling mediated pathway, independently of daf-16. May promote nuclear accumulation of mab-10 in seam cells post-transcriptionally. Dispensable for seam cell fusion. Functionally, required for seam cell fusion. The polypeptide is Zinc finger transcription factor lin-29 (Caenorhabditis elegans).